Consider the following 410-residue polypeptide: Divergent protein kinase domain 1C (410 aa).

Topologically, residues 1-19 (MARAAGERGRAARCGRWRR) are cytoplasmic. A May mediate ER retention motif is present at residues 18–19 (RR). Residues 20–40 (GALLAFAAWTAGWVLAAALLL) form a helical membrane-spanning segment. Residues 41–410 (RAHPSVLSER…TLKELQEAEK (370 aa)) lie on the Lumenal side of the membrane.

This sequence belongs to the DIPK family. Among the many cysteines in the lumenal domain, most are probably involved in disulfide bonds. Mainly expressed in the brain and eye, some expression in kidney and skeletal muscle.

It is found in the endoplasmic reticulum membrane. The protein is Divergent protein kinase domain 1C (Dipk1c) of Mus musculus (Mouse).